The primary structure comprises 305 residues: Transcription factor MYB87 (305 aa).

HTH myb-type domains lie at 9–66 and 67–117; these read KMAV…RPNL and KHGG…KKKL. DNA-binding regions (H-T-H motif) lie at residues 38-62 and 90-113; these read WISLPQRIGIKRCGKSCRLRWLNYL and WSIIASQLPGRTDNDIKNYWNTRL.

As to expression, expressed in roots, leaves, internodes, shoot tips and flowers.

Its subcellular location is the nucleus. In terms of biological role, transcription factor that functions as a regulator of genes affecting cell wall organization and remodeling. Activates genes related to the primary cell wall and represses genes related to the secondary cell wall and expansins. Required for the regulation of longitudinal cell growth in stems, leaves, petioles, roots, flowers and siliques. This chain is Transcription factor MYB87, found in Arabidopsis thaliana (Mouse-ear cress).